The primary structure comprises 149 residues: Down syndrome critical region protein 9 (149 aa).

A disordered region spans residues 1–41 (MGRICPVNSRARRLRARPGRPSGDSLPYHQLQGGAPRLWSP).

The polypeptide is Down syndrome critical region protein 9 (DSCR9) (Pan troglodytes (Chimpanzee)).